Here is a 431-residue protein sequence, read N- to C-terminus: Aspartate--tRNA(Asp/Asn) ligase (431 aa).

Residue Glu-170 participates in L-aspartate binding. Residues Gln-192–Lys-195 are aspartate. L-aspartate is bound at residue Arg-214. ATP is bound by residues Arg-214 to Glu-216, Arg-222 to Leu-224, and Glu-354. Mg(2+) is bound by residues Glu-354 and Ser-357. L-aspartate contacts are provided by Ser-357 and Arg-361. ATP is bound at residue Gly-402–Arg-405.

The protein belongs to the class-II aminoacyl-tRNA synthetase family. Type 2 subfamily. In terms of assembly, homodimer. It depends on Mg(2+) as a cofactor.

It localises to the cytoplasm. It carries out the reaction tRNA(Asx) + L-aspartate + ATP = L-aspartyl-tRNA(Asx) + AMP + diphosphate. Its function is as follows. Aspartyl-tRNA synthetase with relaxed tRNA specificity since it is able to aspartylate not only its cognate tRNA(Asp) but also tRNA(Asn). Reaction proceeds in two steps: L-aspartate is first activated by ATP to form Asp-AMP and then transferred to the acceptor end of tRNA(Asp/Asn). This is Aspartate--tRNA(Asp/Asn) ligase from Methanopyrus kandleri (strain AV19 / DSM 6324 / JCM 9639 / NBRC 100938).